We begin with the raw amino-acid sequence, 218 residues long: ATP-dependent Clp protease proteolytic subunit 2 (218 aa).

Residue serine 114 is the Nucleophile of the active site. Residue histidine 139 is part of the active site.

Belongs to the peptidase S14 family. In terms of assembly, fourteen ClpP subunits assemble into 2 heptameric rings which stack back to back to give a disk-like structure with a central cavity, resembling the structure of eukaryotic proteasomes.

The protein resides in the cytoplasm. It carries out the reaction Hydrolysis of proteins to small peptides in the presence of ATP and magnesium. alpha-casein is the usual test substrate. In the absence of ATP, only oligopeptides shorter than five residues are hydrolyzed (such as succinyl-Leu-Tyr-|-NHMec, and Leu-Tyr-Leu-|-Tyr-Trp, in which cleavage of the -Tyr-|-Leu- and -Tyr-|-Trp bonds also occurs).. Cleaves peptides in various proteins in a process that requires ATP hydrolysis. Has a chymotrypsin-like activity. Plays a major role in the degradation of misfolded proteins. Probably partially responsible for degradation of ECF sigma factor SigR prime. The polypeptide is ATP-dependent Clp protease proteolytic subunit 2 (Streptomyces coelicolor (strain ATCC BAA-471 / A3(2) / M145)).